Consider the following 712-residue polypeptide: Asp/Glu-specific dipeptidyl-peptidase (712 aa).

Positions 1–18 are cleaved as a signal peptide; it reads MKRFFKMALFLGVSALYG. Catalysis depends on charge relay system residues His-84, Asp-220, and Ser-647.

Belongs to the peptidase S46 family.

Its function is as follows. Catalyzes the removal of dipeptides from the N-terminus of oligopeptides. Shows a strict specificity for acidic residues (Asp or Glu) in the P1 position, and has probably a hydrophobic residue preference at the P2 position. Preferentially cleaves the synthetic substrate Leu-Asp-methylcoumaryl-7-amide (Leu-Asp-MCA) as compared to Leu-Glu-MCA. The protein is Asp/Glu-specific dipeptidyl-peptidase (dpp11) of Capnocytophaga gingivalis.